Reading from the N-terminus, the 559-residue chain is Dihydroxy-acid dehydratase (559 aa).

Aspartate 78 is a Mg(2+) binding site. A [2Fe-2S] cluster-binding site is contributed by cysteine 119. The Mg(2+) site is built by aspartate 120 and lysine 121. Lysine 121 is modified (N6-carboxylysine). Cysteine 191 is a [2Fe-2S] cluster binding site. Glutamate 442 contacts Mg(2+). Serine 468 (proton acceptor) is an active-site residue.

The protein belongs to the IlvD/Edd family. Homodimer. Requires [2Fe-2S] cluster as cofactor. The cofactor is Mg(2+).

The catalysed reaction is (2R)-2,3-dihydroxy-3-methylbutanoate = 3-methyl-2-oxobutanoate + H2O. It catalyses the reaction (2R,3R)-2,3-dihydroxy-3-methylpentanoate = (S)-3-methyl-2-oxopentanoate + H2O. The protein operates within amino-acid biosynthesis; L-isoleucine biosynthesis; L-isoleucine from 2-oxobutanoate: step 3/4. Its pathway is amino-acid biosynthesis; L-valine biosynthesis; L-valine from pyruvate: step 3/4. Functionally, functions in the biosynthesis of branched-chain amino acids. Catalyzes the dehydration of (2R,3R)-2,3-dihydroxy-3-methylpentanoate (2,3-dihydroxy-3-methylvalerate) into 2-oxo-3-methylpentanoate (2-oxo-3-methylvalerate) and of (2R)-2,3-dihydroxy-3-methylbutanoate (2,3-dihydroxyisovalerate) into 2-oxo-3-methylbutanoate (2-oxoisovalerate), the penultimate precursor to L-isoleucine and L-valine, respectively. This Agathobacter rectalis (strain ATCC 33656 / DSM 3377 / JCM 17463 / KCTC 5835 / VPI 0990) (Eubacterium rectale) protein is Dihydroxy-acid dehydratase.